The sequence spans 322 residues: Replication factor C small subunit (322 aa).

Position 50–57 (50–57 (GPAGTGKT)) interacts with ATP.

This sequence belongs to the activator 1 small subunits family. RfcS subfamily. Heteromultimer composed of small subunits (RfcS) and large subunits (RfcL).

Part of the RFC clamp loader complex which loads the PCNA sliding clamp onto DNA. This is Replication factor C small subunit from Halobacterium salinarum (strain ATCC 700922 / JCM 11081 / NRC-1) (Halobacterium halobium).